Consider the following 100-residue polypeptide: C-X-C motif chemokine 2 (100 aa).

An N-terminal signal peptide occupies residues Met1 to Ala31. 2 disulfides stabilise this stretch: Cys36–Cys62 and Cys38–Cys78.

This sequence belongs to the intercrine alpha (chemokine CxC) family. Homotetramer. As to expression, at least expressed in the lung and trachea.

Its subcellular location is the secreted. Chemotactic for human polymorphonuclear leukocytes but does not induce chemokinesis or an oxidative burst. Contributes to neutrophil activation during inflammation. This is C-X-C motif chemokine 2 (Cxcl2) from Rattus norvegicus (Rat).